The sequence spans 85 residues: Large ribosomal subunit protein bL27 (85 aa).

The disordered stretch occupies residues 1–20; the sequence is MAHKKAGGSTRNGRDSEAKR.

This sequence belongs to the bacterial ribosomal protein bL27 family.

The polypeptide is Large ribosomal subunit protein bL27 (Citrobacter koseri (strain ATCC BAA-895 / CDC 4225-83 / SGSC4696)).